A 348-amino-acid chain; its full sequence is Protein RecA (348 aa).

65–72 (GPESSGKT) is a binding site for ATP.

Belongs to the RecA family.

The protein localises to the cytoplasm. In terms of biological role, can catalyze the hydrolysis of ATP in the presence of single-stranded DNA, the ATP-dependent uptake of single-stranded DNA by duplex DNA, and the ATP-dependent hybridization of homologous single-stranded DNAs. It interacts with LexA causing its activation and leading to its autocatalytic cleavage. In Enterococcus faecalis (strain ATCC 700802 / V583), this protein is Protein RecA.